The sequence spans 59 residues: Large ribosomal subunit protein uL30 (59 aa).

Belongs to the universal ribosomal protein uL30 family. As to quaternary structure, part of the 50S ribosomal subunit.

The polypeptide is Large ribosomal subunit protein uL30 (Actinobacillus pleuropneumoniae serotype 7 (strain AP76)).